A 660-amino-acid chain; its full sequence is Neurexin-2-beta (660 aa).

A compositionally biased stretch (gly residues) spans 1 to 10 (MPPGGSGQGG). A disordered region spans residues 1–27 (MPPGGSGQGGCPRRPPALAGPLPPPPP). The N-terminal stretch at 1 to 46 (MPPGGSGQGGCPRRPPALAGPLPPPPPPPPLPLLLGLLLLLGAAEG) is a signal peptide. The Extracellular segment spans residues 47–584 (ARVSSSLSTT…EVIRESSSTT (538 aa)). The Laminin G-like domain occupies 87 to 295 (TTYIFGKGGA…HLRLVGEGPS (209 aa)). Residues Asp139 and Val156 each coordinate Ca(2+). Asn186 carries N-linked (GlcNAc...) asparagine glycosylation. 2 residues coordinate Ca(2+): Ile238 and Asn240. Residue Ser350 is glycosylated (O-linked (Xyl...) (heparan sulfate) serine). Disordered regions lie at residues 408 to 458 (ATQD…LPPT) and 537 to 571 (EPRR…RGPP). Residue Asn561 is glycosylated (N-linked (GlcNAc...) asparagine). Residues 585–605 (GMVVGIVAAAALCILILLYAM) form a helical membrane-spanning segment. The Cytoplasmic segment spans residues 606–660 (YKYRNRDEGSYQVDQSRNYISNSAQSNGAVVKEKAPAAPKTPSKAKKNKDKEYYV). The interval 627-660 (NSAQSNGAVVKEKAPAAPKTPSKAKKNKDKEYYV) is disordered.

The protein belongs to the neurexin family. As to quaternary structure, interacts (via cytoplasmic C-terminal region) with CASK. Specific isoforms bind alpha-dystroglycan and neuroligins NLGN1, NLGN2 and NLGN3. Interacts with CBLN1, CBLN2 and, less avidly, with CBLN4. Interacts with CLSTN3. O-glycosylated; contains heparan sulfate. Heparan sulfate attachment is required for synapse development by mediating interactions with neuroligins.

It is found in the presynaptic cell membrane. In terms of biological role, neuronal cell surface protein that may be involved in cell recognition and cell adhesion. The sequence is that of Neurexin-2-beta from Mus musculus (Mouse).